The primary structure comprises 133 residues: CDGSH iron-sulfur domain-containing protein 2 homolog (133 aa).

The Lumenal portion of the chain corresponds to 1-35; that stretch reads MEPISHLVKSSLPNYLSSLPIPDSIGGWFKLSFKD. A helical transmembrane segment spans residues 36-58; sequence WLALIPPTVVVAGLGYTAYLAYC. Over 59-133 the chain is Cytoplasmic; the sequence is PAAQGSCSAK…DNVGPIVIKK (75 aa). Cysteine 100, cysteine 102, cysteine 111, and histidine 115 together coordinate [2Fe-2S] cluster.

The protein belongs to the CISD protein family. CISD2 subfamily. [2Fe-2S] cluster is required as a cofactor.

It is found in the endoplasmic reticulum membrane. This is CDGSH iron-sulfur domain-containing protein 2 homolog from Drosophila erecta (Fruit fly).